A 111-amino-acid polypeptide reads, in one-letter code: Large ribosomal subunit protein eL30 (111 aa).

The protein belongs to the eukaryotic ribosomal protein eL30 family.

The sequence is that of Large ribosomal subunit protein eL30 (RPL30) from Oryza sativa subsp. japonica (Rice).